A 1140-amino-acid chain; its full sequence is uncharacterized protein (1140 aa).

2 consecutive transmembrane segments (helical) span residues 8-28 (FLLFGFALGSFGWFVASSAFT) and 1098-1118 (IAITFTGSAALLSTIIASGVV).

The protein to M.pneumoniae MPN_375 (in the N-terminal section), M.pneumoniae MPN_374 (in the central section) and M.pneumoniae MPN_373 (in the C-terminal section).

Its subcellular location is the cell membrane. This is an uncharacterized protein from Mycoplasma pneumoniae (strain ATCC 29342 / M129 / Subtype 1) (Mycoplasmoides pneumoniae).